A 200-amino-acid polypeptide reads, in one-letter code: 3-isopropylmalate dehydratase small subunit (200 aa).

It belongs to the LeuD family. LeuD type 1 subfamily. In terms of assembly, heterodimer of LeuC and LeuD.

The enzyme catalyses (2R,3S)-3-isopropylmalate = (2S)-2-isopropylmalate. The protein operates within amino-acid biosynthesis; L-leucine biosynthesis; L-leucine from 3-methyl-2-oxobutanoate: step 2/4. Its function is as follows. Catalyzes the isomerization between 2-isopropylmalate and 3-isopropylmalate, via the formation of 2-isopropylmaleate. This chain is 3-isopropylmalate dehydratase small subunit, found in Erythrobacter litoralis (strain HTCC2594).